The chain runs to 138 residues: MIEIEINNAQEITSALERLAQATAHRAPLMRSIAGTMESAVAQNFEVGGRPAWKKLKIRQGTPLVDTENLMASITSEYNNNEAIVGTNEPYAAIHQFGGKAGRGRKVAIPARPFLILTPQDEADILEDIQDYFQLLIK.

It to phage Mu protein G.

This chain is Mu-like prophage FluMu G protein 2, found in Haemophilus influenzae (strain ATCC 51907 / DSM 11121 / KW20 / Rd).